Reading from the N-terminus, the 523-residue chain is Putative oxidoreductase TDA3 (523 aa).

Low complexity predominate over residues 157 to 172 (NSSLSSSGSSLKNDSA). Residues 157 to 189 (NSSLSSSGSSLKNDSASNEEEGSDIHVSSSVPS) form a disordered region. Phosphoserine occurs at positions 189, 204, and 306.

Belongs to the TDA3 family. As to quaternary structure, interacts with BTN2.

The protein resides in the cytoplasm. The protein localises to the late endosome. Putative oxidoreductase that negatively regulates the retrieval of cargo from late endosomes to the Golgi. Regulates YIF1 and KEX2 localization. Required for fast DNA replication. The protein is Putative oxidoreductase TDA3 (TDA3) of Saccharomyces cerevisiae (strain ATCC 204508 / S288c) (Baker's yeast).